Consider the following 480-residue polypeptide: MSGPTWLPPKQPEPSRLPQGRSLPRGALGPPTAHGATLQPHPRVNFCPLPPEHCYQPPGVPEDRGPTWVGSHGTPQRLQGLPPDRGIIRPGSLDAEIDSLTSMLADLDGGRSHAPRRPDRQAFEAPPPHAYRGGSLKPSGGAVPTPMLPASHYGGPTPASYATASTPAGPAFPVQVKVAQPVRGCGLPRRGASQASGPLPGPHFPLTGRGEVWGAGYRSHREPGPGVPEGPSGVHIPAGGGRGGGHEPQGPLGQPPEEELERLTKKLVHDMSHPPSGEYFGRCGGCGEDVVGDGAGVVALDRVFHIGCFVCSTCRAQLRGQHFYAVERRAYCESCYVATLEKCSTCSEPILDRILRAMGKAYHPGCFTCVVCHRGLDGIPFTVDATSQIHCIEDFHRKFAPRCSVCGGAIMPEPGQEETVRIVALDRSFHIGCYKCEECGLLLSSEGECQGCYPLDGHILCKACSAWRIQELSATVTTDC.

Positions 1 to 12 are enriched in pro residues; it reads MSGPTWLPPKQP. The disordered stretch occupies residues 1 to 43; that stretch reads MSGPTWLPPKQPEPSRLPQGRSLPRGALGPPTAHGATLQPHPR. Asymmetric dimethylarginine; alternate is present on arginine 25. Residue arginine 25 is modified to Omega-N-methylarginine; alternate. Position 55 is a phosphotyrosine; by SRC (tyrosine 55). The tract at residues 57–84 is disordered; it reads PPGVPEDRGPTWVGSHGTPQRLQGLPPD. Serine 92 carries the post-translational modification Phosphoserine. A disordered region spans residues 107-134; that stretch reads LDGGRSHAPRRPDRQAFEAPPPHAYRGG. Over residues 108 to 122 the composition is skewed to basic and acidic residues; the sequence is DGGRSHAPRRPDRQA. Arginine 111, arginine 183, and arginine 190 each carry omega-N-methylarginine. The residue at position 193 (serine 193) is a Phosphoserine. Arginine 209 and arginine 242 each carry omega-N-methylarginine. The disordered stretch occupies residues 218–257; the sequence is RSHREPGPGVPEGPSGVHIPAGGGRGGGHEPQGPLGQPPE. Residues 238 to 247 show a composition bias toward gly residues; it reads AGGGRGGGHE. LIM zinc-binding domains follow at residues 281 to 339, 341 to 401, and 404 to 471; these read GRCG…YVAT, EKCS…KFAP, and SVCG…RIQE. The interaction with MAGI1 and PTPN13 stretch occupies residues 473–480; the sequence is SATVTTDC.

This sequence belongs to the zyxin/ajuba family. In terms of assembly, specifically interacts with the ligand binding domain of the thyroid receptor (TR) in the presence of thyroid hormone. Interacts (via the third LIM domain and C-terminus) with PTPN13 (via the second PDZ domain). Interacts (via the second LIM domain or via the third LIM domain plus C-terminus) with PDLIM4 (via PDZ domain). Found in a complex with PTPN13 and PDLIM4. Interacts with SVIL isoform 2. Interacts with LPAR2 but not other LPA receptors. Interacts with PRKAA2. Interacts with MAGI1. Interacts with SCRIB. In case of infection, interacts with S.typhimurium protein sseI. In terms of processing, phosphorylation at Tyr-55 by SRC is required for enhancement of lysophosphatidic acid-induced cell migration. Tyr-55 is dephosphorylated by PTPN13. As to expression, highly expressed in kidney, stomach, lung, heart and testis. Low expression levels in brain, colon, thymus, pancreas and skin. Not expressed in skeletal muscle.

It is found in the cytoplasm. Its subcellular location is the cytoskeleton. The protein localises to the cell junction. The protein resides in the focal adhesion. It localises to the nucleus. Functionally, relays signals from the cell surface to the nucleus to weaken adherens junction and promote actin cytoskeleton reorganization and cell invasiveness. Involved in lysophosphatidic acid-induced cell adhesion and migration. Acts as a transcriptional coactivator for NF-kappa-B and JUN, and mediates the transrepression of these transcription factors induced by glucocorticoid receptor. This Mus musculus (Mouse) protein is Thyroid receptor-interacting protein 6 (Trip6).